We begin with the raw amino-acid sequence, 512 residues long: Centrosomal protein CCDC61 (512 aa).

Residue Met1 is modified to N-acetylmethionine. Residues 1-143 (MDQPAGLQVD…PLPLPYQGKP (143 aa)) are head domain. Coiled-coil stretches lie at residues 178 to 205 (IWHLREQVSRLASEKRELEAQLGRSREE) and 248 to 275 (CRRLAKELEEAKASERSLRARLKTLTSE). The interval 276 to 477 (LALYKRGRRT…KSLANSGGWV (202 aa)) is disordered. Position 285 is a phosphothreonine (Thr285). Positions 293–306 (TREDRASSSRERSA) are enriched in basic and acidic residues. 4 positions are modified to phosphoserine: Ser334, Ser336, Ser373, and Ser376. Residues 407–425 (RSSSVDSFRSRCSSASSCS) show a composition bias toward low complexity. Ser447 and Ser473 each carry phosphoserine.

This sequence belongs to the CCDC61 family. Forms homodimers (via head domain). Interacts with CEP170. Interacts with PCM1 and CEP131. Binds tubulin.

It localises to the cytoplasm. Its subcellular location is the cytoskeleton. The protein localises to the microtubule organizing center. The protein resides in the centrosome. It is found in the centriolar satellite. It localises to the cilium basal body. Functionally, microtubule-binding centrosomal protein required for centriole cohesion, independently of the centrosome-associated protein/CEP250 and rootletin/CROCC linker. In interphase, required for anchoring microtubule at the mother centriole subdistal appendages and for centrosome positioning. During mitosis, may be involved in spindle assembly and chromatin alignment by regulating the organization of spindle microtubules into a symmetrical structure. Has been proposed to play a role in CEP170 recruitment to centrosomes. However, this function could not be confirmed. Plays a non-essential role in ciliogenesis. In Homo sapiens (Human), this protein is Centrosomal protein CCDC61.